The following is a 199-amino-acid chain: Recombination protein RecR (199 aa).

Residues 57–72 (CSICGNFTDRDPCRLC) form a C4-type zinc finger. The Toprim domain occupies 80–175 (SCICVVEEAR…KVTRLAYGLP (96 aa)).

The protein belongs to the RecR family.

Functionally, may play a role in DNA repair. It seems to be involved in an RecBC-independent recombinational process of DNA repair. It may act with RecF and RecO. This Moorella thermoacetica (strain ATCC 39073 / JCM 9320) protein is Recombination protein RecR.